We begin with the raw amino-acid sequence, 108 residues long: DNA-binding protein HBbu (108 aa).

It belongs to the bacterial histone-like protein family.

Histone-like DNA-binding protein which is capable of wrapping DNA to stabilize it, and thus to prevent its denaturation under extreme environmental conditions. The sequence is that of DNA-binding protein HBbu (hbb) from Borreliella japonica (Borrelia japonica).